A 170-amino-acid chain; its full sequence is Acetolactate synthase small subunit (170 aa).

The ACT domain maps to 9–83 (TLSVLVEDKP…NVIKIVEQEE (75 aa)). An Isoglutamyl lysine isopeptide (Lys-Gln) (interchain with Q-Cter in protein Pup) cross-link involves residue lysine 46.

It belongs to the acetolactate synthase small subunit family. As to quaternary structure, dimer of large and small chains.

The catalysed reaction is 2 pyruvate + H(+) = (2S)-2-acetolactate + CO2. Its pathway is amino-acid biosynthesis; L-isoleucine biosynthesis; L-isoleucine from 2-oxobutanoate: step 1/4. It participates in amino-acid biosynthesis; L-valine biosynthesis; L-valine from pyruvate: step 1/4. This chain is Acetolactate synthase small subunit (ilvH), found in Mycolicibacterium smegmatis (strain ATCC 700084 / mc(2)155) (Mycobacterium smegmatis).